A 101-amino-acid chain; its full sequence is ATP synthase subunit c (101 aa).

2 consecutive transmembrane segments (helical) span residues isoleucine 35–glycine 55 and glycine 81–valine 101.

Belongs to the ATPase C chain family. As to quaternary structure, F-type ATPases have 2 components, F(1) - the catalytic core - and F(0) - the membrane proton channel. F(1) has five subunits: alpha(3), beta(3), gamma(1), delta(1), epsilon(1). F(0) has three main subunits: a(1), b(2) and c(10-14). The alpha and beta chains form an alternating ring which encloses part of the gamma chain. F(1) is attached to F(0) by a central stalk formed by the gamma and epsilon chains, while a peripheral stalk is formed by the delta and b chains.

It is found in the cell membrane. In terms of biological role, f(1)F(0) ATP synthase produces ATP from ADP in the presence of a proton or sodium gradient. F-type ATPases consist of two structural domains, F(1) containing the extramembraneous catalytic core and F(0) containing the membrane proton channel, linked together by a central stalk and a peripheral stalk. During catalysis, ATP synthesis in the catalytic domain of F(1) is coupled via a rotary mechanism of the central stalk subunits to proton translocation. Key component of the F(0) channel; it plays a direct role in translocation across the membrane. A homomeric c-ring of between 10-14 subunits forms the central stalk rotor element with the F(1) delta and epsilon subunits. The chain is ATP synthase subunit c from Mycoplasma capricolum subsp. capricolum (strain California kid / ATCC 27343 / NCTC 10154).